The primary structure comprises 66 residues: Large ribosomal subunit protein bL32 (66 aa).

Belongs to the bacterial ribosomal protein bL32 family.

In Rickettsia canadensis (strain McKiel), this protein is Large ribosomal subunit protein bL32.